We begin with the raw amino-acid sequence, 490 residues long: MELLGSTLTATYAHPPPASASFLPAIGTITSSYKDRFPHRNLTHSLSLPWRPNTYYKTAYNYPTLAPYSSRSQRVCESTMLPFVSNRTTFFTRYTPDDWYRSNLVSFQESNSSRHNSERLRVDTSRLIQDKYQQIRKTQAHSTQNLGERVNDLAFWKSEITHELDEMIGETNALTDIKRRLERGLIETEGPLQVSRECLFHREKRMGIDLVHDEAEKELLAEVDTILCCQERMRQHLDKANAQLASDRSAQHELEKDLSDKQAALRIDDKCQHLRNTSEGVSYFRGVERVDATVSVPETWAKFTDDNVLRSQSERAASAKLREETENLLIVTANEMWNQFNKVNLAFTNRIAETVDAKNKIHTHLTKTLQEIFQIEMTIESIKKAIKEKSAFLKVAQTRLDERTRRPNVELCRDMAQLRLVNEVYEVDETIQTLQQRLRDSEDTLQSLAHTKATLEHDLAVKANTLYIDQEKCMSMRNSYPSTLRLVGYC.

O-linked (GalNAc...) threonine glycans are attached at residues T7, T9, and T11. 4 N-linked (GlcNAc...) asparagine glycosylation sites follow: N41, N86, N111, and N276. Positions M415–V461 form a coiled coil.

The protein belongs to the tektin family. In terms of assembly, microtubule inner protein component of sperm flagellar doublet microtubules. Interacts with TEKT1, TEKT2, TEKT4 and TEKT5. Interacts with CCDC38. Post-translationally, N- and O-glycosylated. In terms of processing, ubiquitinated, leading to its degradation. Deubiquitinated by USP16, promoting its stability. May be proteolytically processed during the epididymal transit of spermatozoa. As to expression, expressed preferentially in testis. Expressed predominantly in late pachytene spermatocytes and early round spermatids. Expressed in spermatozoa.

It localises to the cytoplasm. The protein resides in the cytoskeleton. It is found in the cilium axoneme. Its subcellular location is the flagellum axoneme. The protein localises to the cytoplasmic vesicle. It localises to the secretory vesicle. The protein resides in the acrosome outer membrane. Microtubule inner protein (MIP) part of the dynein-decorated doublet microtubules (DMTs) in cilia and flagellar axoneme. Forms filamentous polymers in the walls of ciliary and flagellar microtubules. Required for normal sperm mobility. The chain is Tektin-3 (Tekt3) from Mus musculus (Mouse).